Reading from the N-terminus, the 478-residue chain is BTB/POZ domain-containing protein 17 (478 aa).

Residues 1–28 (MPRRGYSKPGSWGSFWAMLTLVGLVTHA) form the signal peptide. Asparagine 61, asparagine 100, and asparagine 195 each carry an N-linked (GlcNAc...) asparagine glycan. A BTB domain is found at 63–132 (SDVVLRVQAA…LYCGELTVLL (70 aa)). The BACK domain occupies 169-269 (AVGWYHYAVG…IPPAQLFQLQ (101 aa)).

The protein localises to the secreted. The sequence is that of BTB/POZ domain-containing protein 17 (BTBD17) from Homo sapiens (Human).